The following is a 906-amino-acid chain: Protein translocase subunit SecA (906 aa).

ATP contacts are provided by residues glutamine 87, 105 to 109 (GEGKT), and aspartate 521. Residues 849-865 (STATAAEPAPEASQSQS) show a composition bias toward low complexity. Residues 849 to 897 (STATAAEPAPEASQSQSTNDATASQNPPITEVEASKVGRNQPCPCGSGK) form a disordered region. Residues 866-876 (TNDATASQNPP) are compositionally biased toward polar residues. Residues cysteine 891, cysteine 893, cysteine 902, and cysteine 903 each contribute to the Zn(2+) site.

This sequence belongs to the SecA family. Monomer and homodimer. Part of the essential Sec protein translocation apparatus which comprises SecA, SecYEG and auxiliary proteins SecDF-YajC and YidC. The cofactor is Zn(2+).

The protein localises to the cell inner membrane. It localises to the cytoplasm. The catalysed reaction is ATP + H2O + cellular proteinSide 1 = ADP + phosphate + cellular proteinSide 2.. Its function is as follows. Part of the Sec protein translocase complex. Interacts with the SecYEG preprotein conducting channel. Has a central role in coupling the hydrolysis of ATP to the transfer of proteins into and across the cell membrane, serving both as a receptor for the preprotein-SecB complex and as an ATP-driven molecular motor driving the stepwise translocation of polypeptide chains across the membrane. The protein is Protein translocase subunit SecA of Dichelobacter nodosus (strain VCS1703A).